A 383-amino-acid chain; its full sequence is UDP-N-acetylglucosamine--N-acetylmuramyl-(pentapeptide) pyrophosphoryl-undecaprenol N-acetylglucosamine transferase (383 aa).

UDP-N-acetyl-alpha-D-glucosamine-binding positions include 10–12 (TGG), Asn124, Arg165, Ser190, Ile245, and Gln290. The tract at residues 364–383 (PFGQAREPGQKPARPPDLAS) is disordered.

The protein belongs to the glycosyltransferase 28 family. MurG subfamily.

The protein localises to the cell inner membrane. It carries out the reaction di-trans,octa-cis-undecaprenyl diphospho-N-acetyl-alpha-D-muramoyl-L-alanyl-D-glutamyl-meso-2,6-diaminopimeloyl-D-alanyl-D-alanine + UDP-N-acetyl-alpha-D-glucosamine = di-trans,octa-cis-undecaprenyl diphospho-[N-acetyl-alpha-D-glucosaminyl-(1-&gt;4)]-N-acetyl-alpha-D-muramoyl-L-alanyl-D-glutamyl-meso-2,6-diaminopimeloyl-D-alanyl-D-alanine + UDP + H(+). It functions in the pathway cell wall biogenesis; peptidoglycan biosynthesis. Functionally, cell wall formation. Catalyzes the transfer of a GlcNAc subunit on undecaprenyl-pyrophosphoryl-MurNAc-pentapeptide (lipid intermediate I) to form undecaprenyl-pyrophosphoryl-MurNAc-(pentapeptide)GlcNAc (lipid intermediate II). The sequence is that of UDP-N-acetylglucosamine--N-acetylmuramyl-(pentapeptide) pyrophosphoryl-undecaprenol N-acetylglucosamine transferase from Anaeromyxobacter sp. (strain K).